A 456-amino-acid chain; its full sequence is Bifunctional protein GlmU (456 aa).

Residues 1–229 (MLNNTMSVVI…ISETDGVNNR (229 aa)) form a pyrophosphorylase region. UDP-N-acetyl-alpha-D-glucosamine-binding positions include 11 to 14 (LAAG), lysine 25, glutamine 76, 81 to 82 (GT), 103 to 105 (YGD), glycine 140, glutamate 154, asparagine 169, and asparagine 227. Aspartate 105 is a Mg(2+) binding site. Asparagine 227 provides a ligand contact to Mg(2+). Positions 230-250 (LQLSRLERIYQAEQAEKLLLA) are linker. The interval 251-456 (GVMLRDPARF…QGWQRPVKKK (206 aa)) is N-acetyltransferase. Residues arginine 333 and lysine 351 each contribute to the UDP-N-acetyl-alpha-D-glucosamine site. The active-site Proton acceptor is the histidine 363. Tyrosine 366 and asparagine 377 together coordinate UDP-N-acetyl-alpha-D-glucosamine. Acetyl-CoA is bound by residues alanine 380, 386–387 (NY), serine 405, alanine 423, and arginine 440.

It in the N-terminal section; belongs to the N-acetylglucosamine-1-phosphate uridyltransferase family. In the C-terminal section; belongs to the transferase hexapeptide repeat family. As to quaternary structure, homotrimer. The cofactor is Mg(2+).

It localises to the cytoplasm. It catalyses the reaction alpha-D-glucosamine 1-phosphate + acetyl-CoA = N-acetyl-alpha-D-glucosamine 1-phosphate + CoA + H(+). It carries out the reaction N-acetyl-alpha-D-glucosamine 1-phosphate + UTP + H(+) = UDP-N-acetyl-alpha-D-glucosamine + diphosphate. It functions in the pathway nucleotide-sugar biosynthesis; UDP-N-acetyl-alpha-D-glucosamine biosynthesis; N-acetyl-alpha-D-glucosamine 1-phosphate from alpha-D-glucosamine 6-phosphate (route II): step 2/2. The protein operates within nucleotide-sugar biosynthesis; UDP-N-acetyl-alpha-D-glucosamine biosynthesis; UDP-N-acetyl-alpha-D-glucosamine from N-acetyl-alpha-D-glucosamine 1-phosphate: step 1/1. It participates in bacterial outer membrane biogenesis; LPS lipid A biosynthesis. Its function is as follows. Catalyzes the last two sequential reactions in the de novo biosynthetic pathway for UDP-N-acetylglucosamine (UDP-GlcNAc). The C-terminal domain catalyzes the transfer of acetyl group from acetyl coenzyme A to glucosamine-1-phosphate (GlcN-1-P) to produce N-acetylglucosamine-1-phosphate (GlcNAc-1-P), which is converted into UDP-GlcNAc by the transfer of uridine 5-monophosphate (from uridine 5-triphosphate), a reaction catalyzed by the N-terminal domain. This is Bifunctional protein GlmU from Enterobacter sp. (strain 638).